A 985-amino-acid chain; its full sequence is P3N-PIPO polyprotein (985 aa).

The Peptidase S30 domain occupies 144 to 287; it reads TFRDGHMNKF…MATVTHMEQY (144 aa). Residues His195, Asp204, and Ser238 each act as for P1 proteinase activity in the active site. The Involved in interaction with stylet and aphid transmission motif lies at 337–340; the sequence is KLTC. Positions 595-597 match the Involved in virions binding and aphid transmission motif; it reads PTK. One can recognise a Peptidase C6 domain in the interval 621–743; the sequence is LYIALDGYCY…ESEIKHYRVG (123 aa). Residues Cys629 and His702 each act as for helper component proteinase activity in the active site.

The protein belongs to the potyviridae P3N-PIPO polyprotein family. In terms of assembly, interacts (via PIPO domain) with host PCaP1 protein; this interaction may help to anchor the movement complex to the plasma membrane from which the complex could move to the plasmodesmata. Potyviral RNA is expressed as two polyproteins which undergo post-translational proteolytic processing. Genome polyprotein is processed by NIa-pro, P1 and HC-pro proteinases resulting in the production of at least ten individual proteins. P3N-PIPO is cleaved by P1 and HC-pro proteinases resulting in the production of three individual proteins. The P1 proteinase and the HC-pro cleave only their respective C-termini autocatalytically.

The protein localises to the host cell junction. Its subcellular location is the host plasmodesma. It catalyses the reaction Hydrolyzes a Gly-|-Gly bond at its own C-terminus, commonly in the sequence -Tyr-Xaa-Val-Gly-|-Gly, in the processing of the potyviral polyprotein.. Required for aphid transmission and also has proteolytic activity. Only cleaves a Gly-Gly dipeptide at its own C-terminus. Interacts with virions and aphid stylets. Acts as a suppressor of RNA-mediated gene silencing, also known as post-transcriptional gene silencing (PTGS), a mechanism of plant viral defense that limits the accumulation of viral RNAs. May have RNA-binding activity. Functionally, allows efficient cell to cell propagation, by bypassing the host cell wall barrier. Transports viral genome to neighboring plant cells directly through plasmosdesmata, without any budding. This chain is P3N-PIPO polyprotein, found in Pepper mottle virus (isolate California) (PeMV).